We begin with the raw amino-acid sequence, 103 residues long: Co-chaperonin GroES (103 aa).

It belongs to the GroES chaperonin family. Heptamer of 7 subunits arranged in a ring. Interacts with the chaperonin GroEL.

It is found in the cytoplasm. Together with the chaperonin GroEL, plays an essential role in assisting protein folding. The GroEL-GroES system forms a nano-cage that allows encapsulation of the non-native substrate proteins and provides a physical environment optimized to promote and accelerate protein folding. GroES binds to the apical surface of the GroEL ring, thereby capping the opening of the GroEL channel. The sequence is that of Co-chaperonin GroES from Synechococcus sp. (strain JA-3-3Ab) (Cyanobacteria bacterium Yellowstone A-Prime).